The chain runs to 256 residues: Extracellular serine-rich protein ARB_03024 (256 aa).

A signal peptide spans Met-1–Ala-19. The interval Lys-135–Ala-235 is disordered. Over residues Gly-149–Gly-159 the composition is skewed to gly residues. 2 stretches are compositionally biased toward low complexity: residues Ser-160–Pro-204 and Pro-215–Ala-235. A lipid anchor (GPI-anchor amidated alanine) is attached at Ala-233. A propeptide spans Ala-234–Leu-256 (removed in mature form).

Its subcellular location is the cell membrane. It localises to the secreted. The chain is Extracellular serine-rich protein ARB_03024 from Arthroderma benhamiae (strain ATCC MYA-4681 / CBS 112371) (Trichophyton mentagrophytes).